The primary structure comprises 274 residues: Putative ABC transporter ATP-binding protein MM_1037 (274 aa).

The ABC transporter domain maps to 2–235 (IRLENVSYCY…PSLKDLGLTP (234 aa)). 35–42 (GRNGSGKS) provides a ligand contact to ATP.

The protein belongs to the ABC transporter superfamily.

The protein localises to the cell membrane. Functionally, probably part of an ABC transporter complex. Responsible for energy coupling to the transport system. In Methanosarcina mazei (strain ATCC BAA-159 / DSM 3647 / Goe1 / Go1 / JCM 11833 / OCM 88) (Methanosarcina frisia), this protein is Putative ABC transporter ATP-binding protein MM_1037.